The primary structure comprises 329 residues: Transaldolase (329 aa).

K136 functions as the Schiff-base intermediate with substrate in the catalytic mechanism.

It belongs to the transaldolase family. Type 1 subfamily. Homodimer.

The protein resides in the cytoplasm. It carries out the reaction D-sedoheptulose 7-phosphate + D-glyceraldehyde 3-phosphate = D-erythrose 4-phosphate + beta-D-fructose 6-phosphate. It participates in carbohydrate degradation; pentose phosphate pathway; D-glyceraldehyde 3-phosphate and beta-D-fructose 6-phosphate from D-ribose 5-phosphate and D-xylulose 5-phosphate (non-oxidative stage): step 2/3. Its function is as follows. Transaldolase is important for the balance of metabolites in the pentose-phosphate pathway. In Methylococcus capsulatus (strain ATCC 33009 / NCIMB 11132 / Bath), this protein is Transaldolase.